The chain runs to 1625 residues: E3 ubiquitin-protein ligase KEG (1625 aa).

Residues 10–56 form an RING-type zinc finger; it reads CSVCHTRYNEDERVPLLLQCGHGFCKDCLSKMFSTSSDTTLTCPRCR. Acidic residues predominate over residues 91-106; sequence YTDDEDDDDEEDGSDE. Positions 91-110 are disordered; the sequence is YTDDEDDDDEEDGSDEDGAR. The region spanning 141–427 is the Protein kinase domain; the sequence is RQIGEESSSG…TFNAMLATFL (287 aa). Residues 147–155 and Lys-176 each bind ATP; that span reads SSSGGFGGV. ANK repeat units follow at residues 467-496, 510-540, 544-573, 579-608, 612-641, 647-676, 685-720, 725-754, 758-787, 791-826, and 832-863; these read DNPNNLHRVVLEGDFEGVRNILAKAAAGGG, DGQSALHLACRRGSAELVEAILEYGEANVDI, DGDPPLVFALAAGSPQCVHVLIKKGANVRS, SGPSVAHVCSYHGQPDCMRELLVAGADPNA, EGETVLHRAVAKKYTDCAIVILENGGSRSM, KCLTPLHMCVATWNVAVIKRWVEVSSPEEI, PVGTALCMAASIRKDHEKEGRELVQILLAAGADPTA, HGRTALHTAAMANNVELVRVILDAGVNANI, HNTIPLHMALARGANSCVSLLLESGSDCNI, EGDNAFHIAADAAKMIRENLDWLIVMLRSPDAAVDV, and KTVRDFLEALPREWISEDLMEALLKRGVHLSP.

In terms of assembly, interacts with ABI5 and EDR1. In terms of processing, autophosphotylated and autoubiquitinated in vitro. Post-translationally, phosphorylation enhances self-ubiquitination. Autoubiquitinated in response to abscisic acid (ABA) and subsequently targeted to proteolysis. Expressed in all tissues of young seedlings. In flowering plants, only detected in the youngest part of the stem, anthers and the receptacle of immature siliques. Not found in mature leave, older parts of the stem, flower parts other than anthers or mature siliques.

The protein localises to the golgi apparatus. It localises to the trans-Golgi network. Its subcellular location is the early endosome. The enzyme catalyses L-seryl-[protein] + ATP = O-phospho-L-seryl-[protein] + ADP + H(+). It catalyses the reaction L-threonyl-[protein] + ATP = O-phospho-L-threonyl-[protein] + ADP + H(+). The catalysed reaction is S-ubiquitinyl-[E2 ubiquitin-conjugating enzyme]-L-cysteine + [acceptor protein]-L-lysine = [E2 ubiquitin-conjugating enzyme]-L-cysteine + N(6)-ubiquitinyl-[acceptor protein]-L-lysine.. It participates in protein modification; protein ubiquitination. Its function is as follows. Mediates E2-dependent protein ubiquitination. Acts as a negative regulator of abscisic acid signaling. Required for ABI5 degradation, by mediating its ubiquitination. Together with EDR1, may regulate endocytic trafficking and/or the formation of signaling complexes on trans-Golgi network (TGN)/ early endosome (EE) vesicles during stress responses. The sequence is that of E3 ubiquitin-protein ligase KEG (KEG) from Arabidopsis thaliana (Mouse-ear cress).